We begin with the raw amino-acid sequence, 343 residues long: Protein pelota homolog (343 aa).

It belongs to the eukaryotic release factor 1 family. Pelota subfamily. In terms of assembly, monomer. A divalent metal cation is required as a cofactor.

Its subcellular location is the cytoplasm. Functionally, may function in recognizing stalled ribosomes, interact with stem-loop structures in stalled mRNA molecules, and effect endonucleolytic cleavage of the mRNA. May play a role in the release non-functional ribosomes and degradation of damaged mRNAs. Has endoribonuclease activity. The sequence is that of Protein pelota homolog from Cenarchaeum symbiosum (strain A).